The sequence spans 548 residues: 2-succinyl-5-enolpyruvyl-6-hydroxy-3-cyclohexene-1-carboxylate synthase (548 aa).

It belongs to the TPP enzyme family. MenD subfamily. In terms of assembly, homodimer. It depends on Mg(2+) as a cofactor. Mn(2+) is required as a cofactor. Thiamine diphosphate serves as cofactor.

It carries out the reaction isochorismate + 2-oxoglutarate + H(+) = 5-enolpyruvoyl-6-hydroxy-2-succinyl-cyclohex-3-ene-1-carboxylate + CO2. Its pathway is quinol/quinone metabolism; 1,4-dihydroxy-2-naphthoate biosynthesis; 1,4-dihydroxy-2-naphthoate from chorismate: step 2/7. The protein operates within quinol/quinone metabolism; menaquinone biosynthesis. Catalyzes the thiamine diphosphate-dependent decarboxylation of 2-oxoglutarate and the subsequent addition of the resulting succinic semialdehyde-thiamine pyrophosphate anion to isochorismate to yield 2-succinyl-5-enolpyruvyl-6-hydroxy-3-cyclohexene-1-carboxylate (SEPHCHC). This Mycobacterium marinum (strain ATCC BAA-535 / M) protein is 2-succinyl-5-enolpyruvyl-6-hydroxy-3-cyclohexene-1-carboxylate synthase.